A 35-amino-acid chain; its full sequence is U1-theraphotoxin-Hhn1a (35 aa).

3 cysteine pairs are disulfide-bonded: Cys2–Cys16, Cys9–Cys21, and Cys15–Cys28.

This sequence belongs to the neurotoxin 10 (Hwtx-1) family. 24 (Hwtx-6) subfamily. Expressed by the venom gland.

Its subcellular location is the secreted. Its function is as follows. Gating-modifier toxin that dose-dependently inhibits inactivation of voltage-gated sodium channels and reduces the peak of sodium current in cockroach DUM neurons. In vivo, reversibly paralyzes cockroaches for several hours, paralyzes rat after intracerebroventricular injection and blocks the neuromuscular transmission of the isolated rat phrenic nerve-diaphragm preparation. In Cyriopagopus hainanus (Chinese bird spider), this protein is U1-theraphotoxin-Hhn1a.